We begin with the raw amino-acid sequence, 205 residues long: Adenylate kinase (205 aa).

ATP is bound at residue Gly10–Thr15. Positions Ser30–Val59 are NMP. AMP is bound by residues Thr31, Arg36, Glu57–Val59, Gly85–Arg88, and Gln92. Positions Thr126–Asp139 are LID. Arg127 contacts ATP. The AMP site is built by Arg136 and Arg147. Position 175 (Lys175) interacts with ATP.

The protein belongs to the adenylate kinase family. Monomer.

Its subcellular location is the cytoplasm. The catalysed reaction is AMP + ATP = 2 ADP. Its pathway is purine metabolism; AMP biosynthesis via salvage pathway; AMP from ADP: step 1/1. Its function is as follows. Catalyzes the reversible transfer of the terminal phosphate group between ATP and AMP. Plays an important role in cellular energy homeostasis and in adenine nucleotide metabolism. The chain is Adenylate kinase from Parvibaculum lavamentivorans (strain DS-1 / DSM 13023 / NCIMB 13966).